Reading from the N-terminus, the 434-residue chain is Trigger factor (434 aa).

The region spanning 160 to 245 (GDKVKMNFVG…LTEVQAANLP (86 aa)) is the PPIase FKBP-type domain.

Belongs to the FKBP-type PPIase family. Tig subfamily.

The protein localises to the cytoplasm. It carries out the reaction [protein]-peptidylproline (omega=180) = [protein]-peptidylproline (omega=0). Its function is as follows. Involved in protein export. Acts as a chaperone by maintaining the newly synthesized protein in an open conformation. Functions as a peptidyl-prolyl cis-trans isomerase. The chain is Trigger factor from Shewanella putrefaciens (strain CN-32 / ATCC BAA-453).